Consider the following 308-residue polypeptide: D-alanine--D-alanine ligase (308 aa).

In terms of domain architecture, ATP-grasp spans 103–302 (KFVFRAAGLP…YGELVSWMVE (200 aa)). 130 to 184 (MDPPYVIKPVSEGSSVGVFIVRAGDNRPPAELTSAEWNLGDEVMAERYIAGRELT) contacts ATP. Mg(2+) contacts are provided by D252, E269, and N271.

The protein belongs to the D-alanine--D-alanine ligase family. The cofactor is Mg(2+). It depends on Mn(2+) as a cofactor.

The protein localises to the cytoplasm. The enzyme catalyses 2 D-alanine + ATP = D-alanyl-D-alanine + ADP + phosphate + H(+). The protein operates within cell wall biogenesis; peptidoglycan biosynthesis. In terms of biological role, cell wall formation. The sequence is that of D-alanine--D-alanine ligase from Parvibaculum lavamentivorans (strain DS-1 / DSM 13023 / NCIMB 13966).